The following is a 406-amino-acid chain: Pygopus homolog 2 (406 aa).

Disordered stretches follow at residues Met-1 to Val-73 and Val-106 to Pro-323. Ala-2 is modified (N-acetylalanine). Position 40 is a phosphoserine (Ser-40). Positions Pro-41–Lys-47 match the Nuclear localization signal motif. 2 stretches are compositionally biased toward pro residues: residues Arg-131–Met-141 and Pro-149–Gly-158. Positions Ser-164–Ser-179 are enriched in polar residues. The span at Ser-236–Pro-252 shows a compositional bias: pro residues. Positions Asn-285 to Ser-296 are enriched in polar residues. Thr-302 bears the Phosphothreonine mark. Residues Val-327–Thr-385 form a PHD-type zinc finger.

In terms of assembly, binds to BCL9 via the PHD-type zinc finger motif, and thereby becomes part of the nuclear beta-catenin/TCF complex.

It is found in the nucleus. Functionally, involved in signal transduction through the Wnt pathway. This is Pygopus homolog 2 (PYGO2) from Homo sapiens (Human).